Here is a 312-residue protein sequence, read N- to C-terminus: Ribosomal RNA small subunit methyltransferase H (312 aa).

S-adenosyl-L-methionine contacts are provided by residues 35-37 (GGH), Asp-55, Phe-80, Asp-102, and Gln-109.

Belongs to the methyltransferase superfamily. RsmH family.

The protein localises to the cytoplasm. The catalysed reaction is cytidine(1402) in 16S rRNA + S-adenosyl-L-methionine = N(4)-methylcytidine(1402) in 16S rRNA + S-adenosyl-L-homocysteine + H(+). In terms of biological role, specifically methylates the N4 position of cytidine in position 1402 (C1402) of 16S rRNA. This Pseudoalteromonas translucida (strain TAC 125) protein is Ribosomal RNA small subunit methyltransferase H.